We begin with the raw amino-acid sequence, 152 residues long: MARVESFELDHNTVKAPYVRLAGTEQNGDALVEKYDLRFLQPNKDALPTGALHTLEHLLAVNMRDELKGIIDISPMGCRTGFYMIMWDQHSPQEIRDALVNVLNKVINTEVVPAVSAKECGNYKDHSLFAAKEYAKIVLDQGISLDPFERIL.

Fe cation-binding residues include His-53, His-57, and Cys-120.

The protein belongs to the LuxS family. As to quaternary structure, homodimer. Fe cation serves as cofactor.

It carries out the reaction S-(5-deoxy-D-ribos-5-yl)-L-homocysteine = (S)-4,5-dihydroxypentane-2,3-dione + L-homocysteine. Involved in the synthesis of autoinducer 2 (AI-2) which is secreted by bacteria and is used to communicate both the cell density and the metabolic potential of the environment. The regulation of gene expression in response to changes in cell density is called quorum sensing. Catalyzes the transformation of S-ribosylhomocysteine (RHC) to homocysteine (HC) and 4,5-dihydroxy-2,3-pentadione (DPD). This Enterococcus faecalis (strain ATCC 700802 / V583) protein is S-ribosylhomocysteine lyase.